A 235-amino-acid chain; its full sequence is ATP-dependent Clp protease proteolytic subunit (235 aa).

Catalysis depends on Ser-123, which acts as the Nucleophile. The active site involves His-148.

It belongs to the peptidase S14 family. Fourteen ClpP subunits assemble into 2 heptameric rings which stack back to back to give a disk-like structure with a central cavity, resembling the structure of eukaryotic proteasomes.

The protein localises to the cytoplasm. The catalysed reaction is Hydrolysis of proteins to small peptides in the presence of ATP and magnesium. alpha-casein is the usual test substrate. In the absence of ATP, only oligopeptides shorter than five residues are hydrolyzed (such as succinyl-Leu-Tyr-|-NHMec, and Leu-Tyr-Leu-|-Tyr-Trp, in which cleavage of the -Tyr-|-Leu- and -Tyr-|-Trp bonds also occurs).. Its function is as follows. Cleaves peptides in various proteins in a process that requires ATP hydrolysis. Has a chymotrypsin-like activity. Plays a major role in the degradation of misfolded proteins. The chain is ATP-dependent Clp protease proteolytic subunit from Novosphingobium aromaticivorans (strain ATCC 700278 / DSM 12444 / CCUG 56034 / CIP 105152 / NBRC 16084 / F199).